Here is a 608-residue protein sequence, read N- to C-terminus: ABC transporter ATP-binding protein RamB (608 aa).

Transmembrane regions (helical) follow at residues 25 to 45 (GVLV…FLVG), 66 to 86 (LWLG…RGVF), 141 to 161 (GLVL…LGLL), 166 to 186 (ALLV…LVTL), and 253 to 273 (AALG…VEWL). Positions 30–296 (LALWSLAESG…FTYLVQSLLP (267 aa)) constitute an ABC transmembrane type-1 domain. A disordered region spans residues 321 to 362 (GPEPEPEPEPEPEPEPELGSGLEPEPEPASEPESGPSTASAS). Residues 324–336 (PEPEPEPEPEPEP) are compositionally biased toward acidic residues. Residues 351–362 (EPESGPSTASAS) are compositionally biased toward low complexity. The ABC transporter domain maps to 376-605 (VELRSVTLSY…SPLYRDLTGH (230 aa)). 410–417 (GPSGIGKS) provides a ligand contact to ATP.

Belongs to the ABC transporter superfamily.

Its subcellular location is the cell membrane. In terms of biological role, probably involved in exporting SapB from the cell. Expression of the ram locus (ramA, ramB and ramR) induces rapid aerial mycelium formation in S.lividans. This Streptomyces coelicolor (strain ATCC BAA-471 / A3(2) / M145) protein is ABC transporter ATP-binding protein RamB.